We begin with the raw amino-acid sequence, 217 residues long: Peptide deformylase (217 aa).

Residues cysteine 91 and histidine 133 each coordinate Fe cation. Glutamate 134 is an active-site residue. Residue histidine 137 participates in Fe cation binding. A disordered region spans residues 153–217 (VSEDGEEEEE…RRGSAAAKEE (65 aa)). Positions 155–176 (EDGEEEEEAEVAEVMPEPEAEG) are enriched in acidic residues. Over residues 177–192 (AGEPSAEGAGQAAAEA) the composition is skewed to low complexity. The segment covering 206–217 (GERRGSAAAKEE) has biased composition (basic and acidic residues).

It belongs to the polypeptide deformylase family. Fe(2+) serves as cofactor.

The catalysed reaction is N-terminal N-formyl-L-methionyl-[peptide] + H2O = N-terminal L-methionyl-[peptide] + formate. Functionally, removes the formyl group from the N-terminal Met of newly synthesized proteins. Requires at least a dipeptide for an efficient rate of reaction. N-terminal L-methionine is a prerequisite for activity but the enzyme has broad specificity at other positions. The chain is Peptide deformylase from Symbiobacterium thermophilum (strain DSM 24528 / JCM 14929 / IAM 14863 / T).